The following is a 361-amino-acid chain: Putative F-box protein At1g33010 (361 aa).

An F-box domain is found at 4–50 (GNTLDSIPTDLILEIFSRLSAKSVGRLRCLSKLWRKGEWFFFSSLQP). The segment at 308-339 (SIRPTEQKHKPTSTETSMSRKDHQVRTIDQPQ) is disordered.

This chain is Putative F-box protein At1g33010, found in Arabidopsis thaliana (Mouse-ear cress).